Here is a 259-residue protein sequence, read N- to C-terminus: Thiazole synthase (259 aa).

Catalysis depends on Lys-98, which acts as the Schiff-base intermediate with DXP. 1-deoxy-D-xylulose 5-phosphate-binding positions include Gly-159, Ala-185–Gly-186, and Asn-207–Ser-208.

The protein belongs to the ThiG family. As to quaternary structure, homotetramer. Forms heterodimers with either ThiH or ThiS.

Its subcellular location is the cytoplasm. The enzyme catalyses [ThiS sulfur-carrier protein]-C-terminal-Gly-aminoethanethioate + 2-iminoacetate + 1-deoxy-D-xylulose 5-phosphate = [ThiS sulfur-carrier protein]-C-terminal Gly-Gly + 2-[(2R,5Z)-2-carboxy-4-methylthiazol-5(2H)-ylidene]ethyl phosphate + 2 H2O + H(+). The protein operates within cofactor biosynthesis; thiamine diphosphate biosynthesis. Functionally, catalyzes the rearrangement of 1-deoxy-D-xylulose 5-phosphate (DXP) to produce the thiazole phosphate moiety of thiamine. Sulfur is provided by the thiocarboxylate moiety of the carrier protein ThiS. In vitro, sulfur can be provided by H(2)S. In Chlorobium phaeovibrioides (strain DSM 265 / 1930) (Prosthecochloris vibrioformis (strain DSM 265)), this protein is Thiazole synthase.